The following is a 325-amino-acid chain: MEIFDYDNILLLPRKCRVESRSECDASVELGGRSFRIPAVPANMKTVVDESICTWLAQNGYFYVMHRFDLDNVQFVREMQGKGCFASISLGVKKPDYDTVDRFVAEGLCPEYITIDIAHGHADSVKNMIGYLKEKLPRSFVIAGNVGTPEAVIDLENWGADATKVGIGPGKVCITKLKTGFGTGGWQLSALKWCARVATKPIIADGGIRSHGDIAKSVRFGATMVMIGSLFAGHEESPGQTVEENGQRFKEYYGSASDFNKGEYKHVEGKRILEPVKGLLANTLIEMEQDVQSSISYSGGKKLMDIRKVNYVILGGDNAGEHLLM.

Catalysis depends on cysteine 173, which acts as the Thioimidate intermediate. Isoleucine 202–valine 225 is an NADP(+) binding site.

Belongs to the IMPDH/GMPR family. GuaC type 2 subfamily.

It carries out the reaction IMP + NH4(+) + NADP(+) = GMP + NADPH + 2 H(+). In terms of biological role, catalyzes the irreversible NADPH-dependent deamination of GMP to IMP. It functions in the conversion of nucleobase, nucleoside and nucleotide derivatives of G to A nucleotides, and in maintaining the intracellular balance of A and G nucleotides. The polypeptide is GMP reductase (Delftia acidovorans (strain DSM 14801 / SPH-1)).